The primary structure comprises 213 residues: MOB kinase activator-like 1 homolog A (213 aa).

Zn(2+) is bound by residues C77, C82, H159, and H164.

Belongs to the MOB1/phocein family.

The sequence is that of MOB kinase activator-like 1 homolog A (mobA) from Dictyostelium discoideum (Social amoeba).